Consider the following 290-residue polypeptide: Small ribosomal subunit biogenesis GTPase RsgA (290 aa).

The 152-residue stretch at 62–213 (KNSLVRPPIV…IADTPGFSSL (152 aa)) folds into the CP-type G domain. GTP is bound by residues 111 to 114 (SKMD) and 156 to 164 (GQTGVGKST). Residues cysteine 237, cysteine 242, histidine 244, and cysteine 250 each contribute to the Zn(2+) site.

This sequence belongs to the TRAFAC class YlqF/YawG GTPase family. RsgA subfamily. As to quaternary structure, monomer. Associates with 30S ribosomal subunit, binds 16S rRNA. It depends on Zn(2+) as a cofactor.

Its subcellular location is the cytoplasm. One of several proteins that assist in the late maturation steps of the functional core of the 30S ribosomal subunit. Helps release RbfA from mature subunits. May play a role in the assembly of ribosomal proteins into the subunit. Circularly permuted GTPase that catalyzes slow GTP hydrolysis, GTPase activity is stimulated by the 30S ribosomal subunit. This chain is Small ribosomal subunit biogenesis GTPase RsgA, found in Streptococcus pyogenes serotype M3 (strain ATCC BAA-595 / MGAS315).